Reading from the N-terminus, the 377-residue chain is MEARRARQKALKVKNLKNVRYMKLISVETSSSSDDSCDSFASDNFANTRLQFNREGCRTRSQCRPSGPLRVAMKFPARNTRRAANTKAAPPKPSESSANDSHSESDSEEEEDGMNFLEKRALNIKQNKAMLAKLMSELESFPGIFSGRHSLPGHRTKDSKSPRRRTFPGVASRRNPERRARPLTRSRSRILGSLGALPTEEEEDEEEEEDKYMLVRRRKSVDGYMNDDDVSRSRRPGSMTLPHIIRPVEDVTEEEIRNICSNSREKIYNRSLGSTCHQCRQKTTDTKTNCRNPDCWGIRGQFCGPCLRNRYGEEVKDALLDPNWHCPPCRGICNCSFCRQRDGRCATGVLVYLAKYHGFGNVHAYLKSLKQEFEMQA.

2 disordered regions span residues 58-113 (RTRS…EEDG) and 144-211 (IFSG…EEDK). The segment covering 76 to 100 (PARNTRRAANTKAAPPKPSESSAND) has biased composition (low complexity). An interaction with MYC region spans residues 148–173 (RHSLPGHRTKDSKSPRRRTFPGVASR). The short motif at 163 to 179 (RRRTFPGVASRRNPERR) is the Nuclear localization signal element. T166 is subject to Phosphothreonine. S193 carries the phosphoserine modification. Phosphothreonine is present on T199. Residues 199–210 (TEEEEDEEEEED) are compositionally biased toward acidic residues. K211 participates in a covalent cross-link: Glycyl lysine isopeptide (Lys-Gly) (interchain with G-Cter in SUMO2). Position 220 is a phosphoserine (S220). Residues 253–377 (EEEIRNICSN…SLKQEFEMQA (125 aa)) form a mediates transcriptional activity region.

Interacts with MYC (via C-terminus), YWHAE and YWHAZ. In terms of processing, phosphorylation at Thr-166 promotes interaction with YWHAE and YWHAZ, dissociation from MYC and sequestration in the cytoplasm.

It is found in the nucleus. The protein localises to the cytoplasm. Participates in MYC-mediated cell transformation and apoptosis; induces anchorage-independent growth and clonogenicity in lymphoblastoid cells. Insufficient to induce tumorigenicity when overexpressed but contributes to MYC-mediated tumorigenesis. May play a role as transcriptional regulator. In Rattus norvegicus (Rat), this protein is Cell division cycle-associated protein 7 (Cdca7).